We begin with the raw amino-acid sequence, 130 residues long: Small ribosomal subunit protein uS11 (130 aa).

It belongs to the universal ribosomal protein uS11 family. As to quaternary structure, part of the 30S ribosomal subunit. Interacts with proteins S7 and S18. Binds to IF-3.

Located on the platform of the 30S subunit, it bridges several disparate RNA helices of the 16S rRNA. Forms part of the Shine-Dalgarno cleft in the 70S ribosome. The polypeptide is Small ribosomal subunit protein uS11 (Alkalilimnicola ehrlichii (strain ATCC BAA-1101 / DSM 17681 / MLHE-1)).